Reading from the N-terminus, the 353-residue chain is Stachydrine N-demethylase reductase subunit Stc4 (353 aa).

The FAD-binding FR-type domain occupies 11-114 (SDAEPLECVT…IGPAGKFSIV (104 aa)). Residues 269–353 (AEIAFALSGV…KPLRRVSVEA (85 aa)) form the 2Fe-2S ferredoxin-type domain. Positions 303, 308, 311, and 341 each coordinate [2Fe-2S] cluster.

This sequence in the N-terminal section; belongs to the FAD-binding oxidoreductase type 6 family. The system is probably composed of an oxygenase subunit (Stc2) and two reductase subunits (Stc3 and Stc4). Requires FAD as cofactor. [2Fe-2S] cluster is required as a cofactor.

Its function is as follows. Reductase involved in the catabolism of stachydrine (L-proline betaine), a source of carbon and nitrogen. Part of a Rieske-type oxygenase system that catalyzes the demethylation of stachydrine to produce N-methyl-L-proline (monomethylproline). This subunit is probably involved in the transfer of electrons from NAD(P)H to the catalytic subunit Stc2. The polypeptide is Stachydrine N-demethylase reductase subunit Stc4 (Rhizobium meliloti (strain 1021) (Ensifer meliloti)).